The primary structure comprises 553 residues: LIM domain-containing protein B (553 aa).

The interval L43–N115 is disordered. A compositionally biased stretch (low complexity) spans G99–N114. 5 LIM zinc-binding domains span residues P205 to S262, P263 to R322, E328 to L387, N388 to R447, and Q448 to E505. Positions E534 to K553 are disordered.

The protein resides in the cytoplasm. It is found in the cell cortex. The protein localises to the cytoskeleton. Functionally, regulates and controls rearrangements of the actin cytoskeleton. Required for tip formation, morphogenesis, cell adhesion and motility, chemotaxis and aggregates formation. May function downstream of paxB. The chain is LIM domain-containing protein B (limB) from Dictyostelium discoideum (Social amoeba).